Here is a 548-residue protein sequence, read N- to C-terminus: Chaperonin GroEL (548 aa).

Residues 30–33, lysine 51, 87–91, glycine 415, 479–481, and aspartate 495 contribute to the ATP site; these read TLGP, DGTTT, and NAA.

Belongs to the chaperonin (HSP60) family. In terms of assembly, forms a cylinder of 14 subunits composed of two heptameric rings stacked back-to-back. Interacts with the co-chaperonin GroES.

It is found in the cytoplasm. It carries out the reaction ATP + H2O + a folded polypeptide = ADP + phosphate + an unfolded polypeptide.. In terms of biological role, together with its co-chaperonin GroES, plays an essential role in assisting protein folding. The GroEL-GroES system forms a nano-cage that allows encapsulation of the non-native substrate proteins and provides a physical environment optimized to promote and accelerate protein folding. This chain is Chaperonin GroEL, found in Methylibium petroleiphilum (strain ATCC BAA-1232 / LMG 22953 / PM1).